The primary structure comprises 583 residues: Arginine--tRNA ligase (583 aa).

The 'HIGH' region signature appears at 123–133 (PNIAKEMHVGH).

Belongs to the class-I aminoacyl-tRNA synthetase family. As to quaternary structure, monomer.

It is found in the cytoplasm. The enzyme catalyses tRNA(Arg) + L-arginine + ATP = L-arginyl-tRNA(Arg) + AMP + diphosphate. In Blochmanniella floridana, this protein is Arginine--tRNA ligase.